A 378-amino-acid chain; its full sequence is tRNA-specific 2-thiouridylase MnmA (378 aa).

ATP contacts are provided by residues 12 to 19 (GLSGGVDS) and methionine 38. Residues 98-100 (NPD) are interaction with target base in tRNA. Cysteine 103 functions as the Nucleophile in the catalytic mechanism. A disulfide bond links cysteine 103 and cysteine 201. ATP is bound at residue glycine 127. Residues 151 to 153 (KDQ) form an interaction with tRNA region. Residue cysteine 201 is the Cysteine persulfide intermediate of the active site. Residues 319–320 (RY) form an interaction with tRNA region.

It belongs to the MnmA/TRMU family.

It localises to the cytoplasm. It carries out the reaction S-sulfanyl-L-cysteinyl-[protein] + uridine(34) in tRNA + AH2 + ATP = 2-thiouridine(34) in tRNA + L-cysteinyl-[protein] + A + AMP + diphosphate + H(+). Catalyzes the 2-thiolation of uridine at the wobble position (U34) of tRNA, leading to the formation of s(2)U34. In Paracidovorax citrulli (strain AAC00-1) (Acidovorax citrulli), this protein is tRNA-specific 2-thiouridylase MnmA.